The chain runs to 449 residues: MREVISIHVGQAGIQVGNACWELFCLEHGIQPDGQMPSNKTIGGGDDAFNTFFSETGTGKHVPRCVFLDLGPTVIDEVRTGTYRQLFHPEQLISGKEDAANNFARGHYTIGKEIVDLCLDGIRKLADQCTGLQGFLVFNSVGGGTGSGLGSLLLERLSVDYGKKSKLGFTIYPSPQVSTAVVEPYNSVLSTHSLLEHTDVAVMLDNEAVYDICRRNLDIERPTYTNLNRLIAQVISSLTASLRFDGALNVDVTEFQTNLVPYPRIHFMLSSAPVISAEKAYHEQLSVAEITNSAFEPASMMAKCDPRHGKYMACCLMYRGDVVPKDVNAAVATIKTKRTIQFVDWCPTGFKCGINYQPPTVVPSGDLAKVMRAVCMISNSTAIAEVFSRIDHKFDLMYAKRAFVHWYVGEGMEEGEFSEAREDLAALEKDYEEVGIETAEGEGEEEGME.

Position 11 (Q11) interacts with GTP. Residue K40 is modified to N6-acetyllysine. Residues S140, G144, T145, T179, N206, and N228 each coordinate GTP. Residue E254 is part of the active site.

It belongs to the tubulin family. As to quaternary structure, dimer of alpha and beta chains. A typical microtubule is a hollow water-filled tube with an outer diameter of 25 nm and an inner diameter of 15 nM. Alpha-beta heterodimers associate head-to-tail to form protofilaments running lengthwise along the microtubule wall with the beta-tubulin subunit facing the microtubule plus end conferring a structural polarity. Microtubules usually have 13 protofilaments but different protofilament numbers can be found in some organisms and specialized cells. Acetylation of alpha chains at Lys-40 stabilizes microtubules and affects affinity and processivity of microtubule motors. This modification has a role in multiple cellular functions, ranging from cell motility, cell cycle progression or cell differentiation to intracellular trafficking and signaling.

It localises to the cytoplasm. The protein resides in the cytoskeleton. It catalyses the reaction GTP + H2O = GDP + phosphate + H(+). In terms of biological role, tubulin is the major constituent of microtubules, a cylinder consisting of laterally associated linear protofilaments composed of alpha- and beta-tubulin heterodimers. Microtubules grow by the addition of GTP-tubulin dimers to the microtubule end, where a stabilizing cap forms. Below the cap, tubulin dimers are in GDP-bound state, owing to GTPase activity of alpha-tubulin. The chain is Tubulin alpha-2 chain from Stylonychia lemnae (Ciliate).